A 107-amino-acid polypeptide reads, in one-letter code: uncharacterized protein (107 aa).

This is an uncharacterized protein from Schizosaccharomyces pombe (strain 972 / ATCC 24843) (Fission yeast).